A 433-amino-acid chain; its full sequence is Serine/threonine-protein kinase DCLK1 (433 aa).

Positions 1-74 are disordered; the sequence is MLELIEVNGT…GEEESDEGFQ (74 aa). Residues Ser-23, Ser-25, Ser-27, Ser-30, Ser-40, Ser-45, Ser-46, Ser-48, Ser-57, and Ser-69 each carry the phosphoserine modification. Residues 40–57 are compositionally biased toward low complexity; it reads SQHGGSSTSLSSTKVCSS. Residues 59–71 show a composition bias toward acidic residues; sequence DENDGPGEEESDE. The region spanning 83–340 is the Protein kinase domain; sequence YKVGRTIGDG…AVQVLEHPWV (258 aa). Residues 89-97 and Lys-112 each bind ATP; that span reads IGDGNFAVV. The active-site Proton acceptor is the Asp-204. Tyr-213 is modified (phosphotyrosine). Residues 388–400 show a composition bias toward basic and acidic residues; that stretch reads QVFRRRRNQDVRG. Residues 388-433 are disordered; the sequence is QVFRRRRNQDVRGRYKAQPAPPELNSESEDYSPSSSETVRSPNSPF. A phosphoserine mark is found at Ser-419, Ser-428, and Ser-431.

This sequence belongs to the protein kinase superfamily. CAMK Ser/Thr protein kinase family. CaMK subfamily.

It carries out the reaction L-seryl-[protein] + ATP = O-phospho-L-seryl-[protein] + ADP + H(+). The catalysed reaction is L-threonyl-[protein] + ATP = O-phospho-L-threonyl-[protein] + ADP + H(+). Probable kinase that may be involved in a calcium-signaling pathway controlling neuronal migration in the developing brain. May also participate in functions of the mature nervous system. The chain is Serine/threonine-protein kinase DCLK1 (Dclk1) from Rattus norvegicus (Rat).